Consider the following 176-residue polypeptide: Shikimate kinase (176 aa).

14–19 lines the ATP pocket; sequence GAGKSS. Ser18 serves as a coordination point for Mg(2+). Substrate is bound by residues Asp36, Arg60, and Gly82. Arg120 lines the ATP pocket. Arg138 contributes to the substrate binding site.

This sequence belongs to the shikimate kinase family. In terms of assembly, monomer. Mg(2+) serves as cofactor.

It localises to the cytoplasm. The catalysed reaction is shikimate + ATP = 3-phosphoshikimate + ADP + H(+). Its pathway is metabolic intermediate biosynthesis; chorismate biosynthesis; chorismate from D-erythrose 4-phosphate and phosphoenolpyruvate: step 5/7. Catalyzes the specific phosphorylation of the 3-hydroxyl group of shikimic acid using ATP as a cosubstrate. The protein is Shikimate kinase of Dehalococcoides mccartyi (strain ATCC BAA-2100 / JCM 16839 / KCTC 5957 / BAV1).